The following is a 168-amino-acid chain: MRCPFCQDAENKVIDSRESHEGSVIRRRRECLTCKRRFTTYERVEELYPLIVKKDGRREAFDREKIVNGLKKACEKRPVSADQLEETVVAIERQLQGMGEKEVPSSVIGEEIMRRLRQLDEVAYVRFASVYRSFRDIAEFMDELKALREAEAREQRQAPPSAPVDKGG.

The segment at Cys-3–Cys-34 is a zinc-finger region. One can recognise an ATP-cone domain in the interval Pro-49 to Glu-139.

The protein belongs to the NrdR family. It depends on Zn(2+) as a cofactor.

Functionally, negatively regulates transcription of bacterial ribonucleotide reductase nrd genes and operons by binding to NrdR-boxes. This is Transcriptional repressor NrdR from Myxococcus xanthus (strain DK1622).